A 294-amino-acid polypeptide reads, in one-letter code: Deubiquitinase OTUD6B (294 aa).

Met-1 bears the N-acetylmethionine mark. The OTU domain maps to 148–285 (LEIKQIPSDG…GEHYNSVTRL (138 aa)). A cys-loop region spans residues 153–159 (IPSDGHC). The active site involves Asp-156. Cys-159 (nucleophile) is an active-site residue. The segment at 220–230 (IVNTAAWGGQL) is variable-loop. Positions 268-278 (YMRHAYGLGEH) are his-loop. His-278 is an active-site residue.

In terms of assembly, interacts with the eukaryotic translation initiation factor 4F complex. Ubiquitously expressed. Expression is observed in several organ systems including the cardiovascular, digestive, central and peripheral nervous and musculoskeletal systems.

The catalysed reaction is Thiol-dependent hydrolysis of ester, thioester, amide, peptide and isopeptide bonds formed by the C-terminal Gly of ubiquitin (a 76-residue protein attached to proteins as an intracellular targeting signal).. In terms of biological role, deubiquitinating enzyme that may play a role in the ubiquitin-dependent regulation of protein synthesis, downstream of mTORC1. May associate with the protein synthesis initiation complex and modify its ubiquitination to repress translation. May also repress DNA synthesis and modify different cellular targets thereby regulating cell growth and proliferation. May also play a role in proteasome assembly and function. The chain is Deubiquitinase OTUD6B from Mus musculus (Mouse).